We begin with the raw amino-acid sequence, 405 residues long: Tryptophan synthase beta chain (405 aa).

At K98 the chain carries N6-(pyridoxal phosphate)lysine.

The protein belongs to the TrpB family. As to quaternary structure, tetramer of two alpha and two beta chains. Requires pyridoxal 5'-phosphate as cofactor.

It catalyses the reaction (1S,2R)-1-C-(indol-3-yl)glycerol 3-phosphate + L-serine = D-glyceraldehyde 3-phosphate + L-tryptophan + H2O. The protein operates within amino-acid biosynthesis; L-tryptophan biosynthesis; L-tryptophan from chorismate: step 5/5. In terms of biological role, the beta subunit is responsible for the synthesis of L-tryptophan from indole and L-serine. This Xanthomonas oryzae pv. oryzae (strain MAFF 311018) protein is Tryptophan synthase beta chain.